The chain runs to 354 residues: Peroxisomal membrane protein PEX32 (354 aa).

5 consecutive transmembrane segments (helical) span residues 24 to 44, 63 to 83, 84 to 104, 151 to 171, and 173 to 193; these read LLNMPPVITTALYTAFPVIFL, FIAIAIYIMVVKYWTVVACTV, LPTIIALGTCASLWFLKTTID, GFSLIAITPCYIWLMTRIFTV, and SFLLVFGVAWLSFHSSWSVAT. N-linked (GlcNAc...) asparagine glycosylation is present at Asn319.

Belongs to the PEX28-32 family. PEX30/31 subfamily.

The protein resides in the peroxisome membrane. It is found in the endoplasmic reticulum membrane. Functionally, with PEX24, contributes to tethering of peroxisomes to the endoplasmic reticulum for organelle biogenesis, positioning and segregation. This is Peroxisomal membrane protein PEX32 from Ogataea parapolymorpha (strain ATCC 26012 / BCRC 20466 / JCM 22074 / NRRL Y-7560 / DL-1) (Yeast).